A 1758-amino-acid chain; its full sequence is Condensin-2 complex subunit hcp-6 (1758 aa).

4 disordered regions span residues 428 to 501 (DPGA…KAKE), 969 to 1008 (ENGSSDASTVNPDMPSVHHTRPPTQLSEVPSSQKSSKGGM), 1379 to 1460 (QKRL…ARLL), and 1500 to 1656 (SKQA…LSRG). Acidic residues predominate over residues 438-462 (EQNEEEDEEEEGEDEEEEEENEQDD). Residues 463–473 (VAVKEEEQSDK) are compositionally biased toward basic and acidic residues. A compositionally biased stretch (acidic residues) spans 474–484 (SDEENDGDNEE). Basic and acidic residues predominate over residues 485-501 (NVSKKKEEKKKEKKAKE). Polar residues predominate over residues 969–979 (ENGSSDASTVN). Residues 999–1008 (SSQKSSKGGM) are compositionally biased toward low complexity. A coiled-coil region spans residues 1326-1385 (CIEHKNDIDEILQDNRQLKDEMMFELQRVKQRTEEANRILDEYLKRVAEFKKQQKRLSKS). Positions 1414 to 1423 (EDQENVEEEV) are enriched in acidic residues. 2 stretches are compositionally biased toward basic and acidic residues: residues 1424–1437 (EMRTPQKKNPDADV) and 1500–1512 (SKQADKTEEKTIV). Composition is skewed to polar residues over residues 1602–1618 (ISANVTLRRSRRGQSTE) and 1640–1651 (VPTSSSGNTEND).

In terms of assembly, component of the condensin-2 complex.

Its subcellular location is the nucleus. The protein resides in the chromosome. It localises to the centromere. Its function is as follows. Chromosomal protein which is recruited to mitotic chromosomes by hcp-3 (CENP-A) and hcp-4 (CENP-C). Involved in chromosome segregation during mitosis, playing a role in chromosome condensation and in maintaining chromosome morphology, rigidity and orientation during mitosis. The sequence is that of Condensin-2 complex subunit hcp-6 from Caenorhabditis elegans.